Reading from the N-terminus, the 399-residue chain is Acetate kinase (399 aa).

Asn-8 lines the Mg(2+) pocket. Position 15 (Lys-15) interacts with ATP. Residue Arg-89 coordinates substrate. The Proton donor/acceptor role is filled by Asp-146. Residues His-206–Gly-210, Asp-283–Arg-285, and Gly-331–Asn-335 each bind ATP. Residue Glu-383 coordinates Mg(2+).

Belongs to the acetokinase family. In terms of assembly, homodimer. It depends on Mg(2+) as a cofactor. Requires Mn(2+) as cofactor.

The protein localises to the cytoplasm. The enzyme catalyses acetate + ATP = acetyl phosphate + ADP. Its pathway is metabolic intermediate biosynthesis; acetyl-CoA biosynthesis; acetyl-CoA from acetate: step 1/2. In terms of biological role, catalyzes the formation of acetyl phosphate from acetate and ATP. Can also catalyze the reverse reaction. This chain is Acetate kinase, found in Streptococcus equi subsp. equi (strain 4047).